Consider the following 62-residue polypeptide: Photosystem II reaction center protein Z (62 aa).

Transmembrane regions (helical) follow at residues 8-28 (AVFA…VVFA) and 41-61 (FSGT…NSLI).

This sequence belongs to the PsbZ family. As to quaternary structure, PSII is composed of 1 copy each of membrane proteins PsbA, PsbB, PsbC, PsbD, PsbE, PsbF, PsbH, PsbI, PsbJ, PsbK, PsbL, PsbM, PsbT, PsbY, PsbZ, Psb30/Ycf12, at least 3 peripheral proteins of the oxygen-evolving complex and a large number of cofactors. It forms dimeric complexes.

The protein resides in the plastid. It localises to the chloroplast thylakoid membrane. May control the interaction of photosystem II (PSII) cores with the light-harvesting antenna, regulates electron flow through the 2 photosystem reaction centers. PSII is a light-driven water plastoquinone oxidoreductase, using light energy to abstract electrons from H(2)O, generating a proton gradient subsequently used for ATP formation. The sequence is that of Photosystem II reaction center protein Z from Pelargonium hortorum (Common geranium).